We begin with the raw amino-acid sequence, 574 residues long: Pescadillo homolog (574 aa).

A disordered region spans residues Pro289–Glu312. Positions Pro292–Ala303 are enriched in acidic residues. The BRCT domain occupies Lys323–Pro416. The segment at Leu452 to Asn486 is disordered. Residues Gly453–Glu477 show a composition bias toward acidic residues.

This sequence belongs to the pescadillo family. As to quaternary structure, component of the PeBoW complex, composed of bop1, pes1 and wdr12. The complex is held together by bop1, which interacts with pes1 via its N-terminal domain and with wdr12 via a high-affinity interaction between the seven-bladed beta-propeller domains of the 2 proteins. The PeBoW complex associates with the 66S pre-ribosome.

The protein resides in the nucleus. The protein localises to the nucleolus. Its subcellular location is the nucleoplasm. Functionally, component of the PeBoW complex, which is required for maturation of 28S and 5.8S ribosomal RNAs and formation of the 60S ribosome. Required for neural crest migration and eye development. This Xenopus laevis (African clawed frog) protein is Pescadillo homolog (pes1).